Consider the following 4743-residue polypeptide: Apolipoprotein B-100 (4743 aa).

The N-terminal stretch at 1–27 (MGPQRPALRAPLLLLFLLLFLDTSVWA) is a signal peptide. The tract at residues 29–113 (DATRFKHLRK…KNSEEFASAM (85 aa)) is heparin-binding. Residues 33 to 660 (FKHLRKYVYS…PSSYLPKESM (628 aa)) enclose the Vitellogenin domain. An intrachain disulfide couples Cys65 to Cys84. N-linked (GlcNAc...) asparagine glycosylation is present at Asn172. Disulfide bonds link Cys173/Cys199, Cys232/Cys248, Cys372/Cys377, and Cys466/Cys501. The heparin-binding stretch occupies residues 219 to 293 (VRPLSTLISS…RFFRGGINQV (75 aa)). The interval 890-947 (NTNFFHESGLEARVALKAGQLKVIIPSPKRPVKLFSGSNTLHLVSTTKTEVIPPLIEN) is heparin-binding. Cys954 and Cys964 are oxidised to a cystine. 4 N-linked (GlcNAc...) asparagine glycosylation sites follow: Asn971, Asn1336, Asn1345, and Asn1491. Lys1973 is subject to N6-acetyllysine. Ser2006 bears the Phosphoserine mark. The heparin-binding stretch occupies residues 2010–2145 (NDAFDEPREF…EKLSQLETYA (136 aa)). Residues Asn2094, Asn2522, Asn2662, Asn2741, Asn2791, Asn2897, Asn2944, and Asn3063 are each glycosylated (N-linked (GlcNAc...) asparagine). Residues 3123-3198 (FLKTTKQSFD…KIKFDKYKTE (76 aa)) form a heparin-binding region. The basic (possible receptor binding region) stretch occupies residues 3136–3146 (KAQYKKNRDKH). 3 N-linked (GlcNAc...) asparagine glycosylation sites follow: Asn3186, Asn3299, and Asn3321. An LDL receptor binding region spans residues 3336–3356 (VTDALQYKLEGTSRLMRKKVL). The heparin-binding stretch occupies residues 3346–3479 (GTSRLMRKKV…QEYSGSVANE (134 aa)). A basic (possible receptor binding region) region spans residues 3349–3357 (RLMRKKVLK). Asn3428, Asn3715, and Asn3828 each carry an N-linked (GlcNAc...) asparagine glycan. Ser3981 is modified (phosphoserine). Phosphothreonine is present on Thr3985. N-linked (GlcNAc...) asparagine glycosylation is found at Asn4203 and Asn4232.

As to quaternary structure, interacts with PCSK9. Interacts with MTTP. Interacts with AUP1. Interacts with CIDEB. Palmitoylated; structural requirement for proper assembly of the hydrophobic core of the lipoprotein particle. Detected in intestine and liver (at protein level).

It localises to the cytoplasm. Its subcellular location is the secreted. The protein localises to the lipid droplet. In terms of biological role, apolipoprotein B is a major protein constituent of chylomicrons (apo B-48), LDL (apo B-100) and VLDL (apo B-100). Apo B-100 functions as a recognition signal for the cellular binding and internalization of LDL particles by the apoB/E receptor. The sequence is that of Apolipoprotein B-100 (Apob) from Rattus norvegicus (Rat).